The following is a 330-amino-acid chain: Lipoyl synthase (330 aa).

Residues C77, C82, C88, C103, C107, C110, and S317 each coordinate [4Fe-4S] cluster. Residues F89–E306 enclose the Radical SAM core domain.

This sequence belongs to the radical SAM superfamily. Lipoyl synthase family. Requires [4Fe-4S] cluster as cofactor.

The protein resides in the cytoplasm. The enzyme catalyses [[Fe-S] cluster scaffold protein carrying a second [4Fe-4S](2+) cluster] + N(6)-octanoyl-L-lysyl-[protein] + 2 oxidized [2Fe-2S]-[ferredoxin] + 2 S-adenosyl-L-methionine + 4 H(+) = [[Fe-S] cluster scaffold protein] + N(6)-[(R)-dihydrolipoyl]-L-lysyl-[protein] + 4 Fe(3+) + 2 hydrogen sulfide + 2 5'-deoxyadenosine + 2 L-methionine + 2 reduced [2Fe-2S]-[ferredoxin]. It functions in the pathway protein modification; protein lipoylation via endogenous pathway; protein N(6)-(lipoyl)lysine from octanoyl-[acyl-carrier-protein]: step 2/2. Its function is as follows. Catalyzes the radical-mediated insertion of two sulfur atoms into the C-6 and C-8 positions of the octanoyl moiety bound to the lipoyl domains of lipoate-dependent enzymes, thereby converting the octanoylated domains into lipoylated derivatives. The sequence is that of Lipoyl synthase from Haemophilus ducreyi (strain 35000HP / ATCC 700724).